A 332-amino-acid chain; its full sequence is Formamidase (332 aa).

Residues 14–259 (FLTALIQYPV…WEIVTAEVYP (246 aa)) enclose the CN hydrolase domain. Catalysis depends on Glu60, which acts as the Proton acceptor. The Proton donor role is filled by Lys132. Catalysis depends on Cys165, which acts as the Nucleophile.

This sequence belongs to the carbon-nitrogen hydrolase superfamily. Aliphatic amidase family.

It catalyses the reaction formamide + H2O = formate + NH4(+). Is an aliphatic amidase with a restricted substrate specificity, as it only hydrolyzes formamide. This Bacillus cereus (strain ZK / E33L) protein is Formamidase.